The sequence spans 450 residues: GTPase HflX (450 aa).

2 disordered regions span residues 79–110 and 173–196; these read TSMAPPPKSKARQRFEGAAEGAAPPEPDPDAA and RLRESSGGGGRQQGPGAGESTLAL. Residues 178-189 are compositionally biased toward gly residues; the sequence is SGGGGRQQGPGA. In terms of domain architecture, Hflx-type G spans 230–395; it reads LRVALVGYTN…TLIAFFEAEM (166 aa). GTP-binding positions include 236–243, 261–265, 283–286, 349–352, and 373–375; these read GYTNAGKS, FATLD, DTVG, NKMD, and SAH. Positions 243 and 263 each coordinate Mg(2+).

Belongs to the TRAFAC class OBG-HflX-like GTPase superfamily. HflX GTPase family. As to quaternary structure, monomer. Associates with the 50S ribosomal subunit. Mg(2+) is required as a cofactor.

It localises to the cytoplasm. In terms of biological role, GTPase that associates with the 50S ribosomal subunit and may have a role during protein synthesis or ribosome biogenesis. The sequence is that of GTPase HflX from Gluconacetobacter diazotrophicus (strain ATCC 49037 / DSM 5601 / CCUG 37298 / CIP 103539 / LMG 7603 / PAl5).